Consider the following 345-residue polypeptide: GTPase Obg (345 aa).

In terms of domain architecture, Obg spans 1–158; that stretch reads MFIDSVKITL…RLVRLELKLI (158 aa). Residues 159–339 enclose the OBG-type G domain; the sequence is ADVGLVGFPN…LKFMLLEEIK (181 aa). GTP contacts are provided by residues 165–172, 190–194, 212–215, 280–283, and 320–322; these read GFPNVGKS, FTTLT, DIPG, SKSD, and SSL. Residues serine 172 and threonine 192 each coordinate Mg(2+).

It belongs to the TRAFAC class OBG-HflX-like GTPase superfamily. OBG GTPase family. In terms of assembly, monomer. Mg(2+) serves as cofactor.

It is found in the cytoplasm. Its function is as follows. An essential GTPase which binds GTP, GDP and possibly (p)ppGpp with moderate affinity, with high nucleotide exchange rates and a fairly low GTP hydrolysis rate. Plays a role in control of the cell cycle, stress response, ribosome biogenesis and in those bacteria that undergo differentiation, in morphogenesis control. The polypeptide is GTPase Obg (Campylobacter jejuni subsp. jejuni serotype O:6 (strain 81116 / NCTC 11828)).